Reading from the N-terminus, the 174-residue chain is Single-stranded DNA-binding protein 1 (174 aa).

One can recognise an SSB domain in the interval 6-111; sequence VNKVILVGNL…VVVNVGGTMQ (106 aa). A DNA-binding region spans residues 55-61; the sequence is WHRVVLF. The tract at residues 110-174 is disordered; sequence MQMLGGRQGG…PMDFDDDIPF (65 aa). Gly residues predominate over residues 115–133; that stretch reads GRQGGGAPAGGGQQQGGWG. Residues 134–160 show a composition bias toward low complexity; that stretch reads QPQQPQGGNQFSGGAQSRPQQQAPAAP. Residues 169–174 carry the Important for interaction with partner proteins motif; that stretch reads DDDIPF.

In terms of assembly, homotetramer. Binds PriA via its C-terminus.

Its function is as follows. Plays an important role in DNA replication, recombination and repair. Binds to ssDNA and to an array of partner proteins to recruit them to their sites of action during DNA metabolism. Stimulates the ATPase activity of PriA. One tetramer binds to 26 nucleotides (nt) of ssDNA, a 55 nt piece of ssDNA probably binds 2 tetramers. The chain is Single-stranded DNA-binding protein 1 from Klebsiella pneumoniae subsp. pneumoniae (strain ATCC 700721 / MGH 78578).